The chain runs to 239 residues: Adapter protein MecA (239 aa).

The span at Glu-118 to Gly-128 shows a compositional bias: basic and acidic residues. Residues Glu-118–Arg-137 are disordered.

The protein belongs to the MecA family. In terms of assembly, homodimer.

Functionally, enables the recognition and targeting of unfolded and aggregated proteins to the ClpC protease or to other proteins involved in proteolysis. This is Adapter protein MecA from Staphylococcus aureus (strain Mu3 / ATCC 700698).